Consider the following 946-residue polypeptide: Multiple C2 and transmembrane domain-containing protein 1 (946 aa).

Disordered stretches follow at residues 28 to 193 and 205 to 229; these read QLGV…QKSS and LEPA…KGEE. Residues 31 to 43 are compositionally biased toward gly residues; that stretch reads VGKGKGGGGGRAG. A compositionally biased stretch (polar residues) spans 87–96; the sequence is FSSSQPNLCC. Residues 143 to 163 show a composition bias toward low complexity; the sequence is PGGRSPDSAPSSSASSSLSSS. Basic and acidic residues predominate over residues 169-187; that stretch reads RGDRIRDEGTRRGSPEAHL. C2 domains lie at 235 to 353, 399 to 516, and 550 to 671; these read KINP…DVTL, QTQS…KLEL, and HKER…AYVL. Ca(2+)-binding residues include Asp-270, Asp-276, Asp-323, Asp-325, Asp-331, Asp-433, Asp-439, Asp-486, Asp-488, Asp-494, Asp-589, Asp-595, Asp-641, Asp-643, and Asp-649. A run of 2 helical transmembrane segments spans residues 758–778 and 861–881; these read FVLF…LLLL and PFLS…LYFI.

The protein belongs to the MCTP family. Ca(2+) serves as cofactor. Expressed in the brain and central nervous system (at protein level). Isoform 1 and isoform 2 are expressed in the brain, kidney, liver, heart, lung, skeletal muscle, testis and spleen. Isoform 2 shows a higher expression in the brain, heart and skeletal muscle.

It is found in the cytoplasmic vesicle. The protein resides in the secretory vesicle. The protein localises to the synaptic vesicle membrane. It localises to the recycling endosome. Its subcellular location is the endoplasmic reticulum membrane. Calcium sensor which is essential for the stabilization of normal baseline neurotransmitter release and for the induction and long-term maintenance of presynaptic homeostatic plasticity. Overexpression in cultured neurons significantly inhibits neuronal transferrin endocytosis, secretory vesicle retrieval, cell migration, and oxidative stress from glutamate toxicity. This is Multiple C2 and transmembrane domain-containing protein 1 from Rattus norvegicus (Rat).